The following is a 254-amino-acid chain: NAD kinase (254 aa).

The active-site Proton acceptor is D44. NAD(+) contacts are provided by residues 44–45 (DG), 114–115 (NE), D144, A152, 155–160 (TAYNYS), and A179.

It belongs to the NAD kinase family. A divalent metal cation serves as cofactor.

Its subcellular location is the cytoplasm. The catalysed reaction is NAD(+) + ATP = ADP + NADP(+) + H(+). Its function is as follows. Involved in the regulation of the intracellular balance of NAD and NADP, and is a key enzyme in the biosynthesis of NADP. Catalyzes specifically the phosphorylation on 2'-hydroxyl of the adenosine moiety of NAD to yield NADP. This is NAD kinase from Cereibacter sphaeroides (strain ATCC 17023 / DSM 158 / JCM 6121 / CCUG 31486 / LMG 2827 / NBRC 12203 / NCIMB 8253 / ATH 2.4.1.) (Rhodobacter sphaeroides).